A 293-amino-acid chain; its full sequence is Acetylglutamate kinase (293 aa).

Substrate is bound by residues 70-71 (GG), Arg92, and Asn186.

Belongs to the acetylglutamate kinase family. ArgB subfamily.

The protein localises to the cytoplasm. The enzyme catalyses N-acetyl-L-glutamate + ATP = N-acetyl-L-glutamyl 5-phosphate + ADP. The protein operates within amino-acid biosynthesis; L-arginine biosynthesis; N(2)-acetyl-L-ornithine from L-glutamate: step 2/4. In terms of biological role, catalyzes the ATP-dependent phosphorylation of N-acetyl-L-glutamate. The protein is Acetylglutamate kinase of Synechococcus sp. (strain CC9605).